Here is a 379-residue protein sequence, read N- to C-terminus: Succinyl-diaminopimelate desuccinylase (379 aa).

Histidine 70 is a Zn(2+) binding site. Aspartate 72 is a catalytic residue. Aspartate 103 is a Zn(2+) binding site. Glutamate 137 (proton acceptor) is an active-site residue. Residues glutamate 138, glutamate 166, and histidine 352 each coordinate Zn(2+).

Belongs to the peptidase M20A family. DapE subfamily. As to quaternary structure, homodimer. Requires Zn(2+) as cofactor. Co(2+) is required as a cofactor.

It carries out the reaction N-succinyl-(2S,6S)-2,6-diaminopimelate + H2O = (2S,6S)-2,6-diaminopimelate + succinate. The protein operates within amino-acid biosynthesis; L-lysine biosynthesis via DAP pathway; LL-2,6-diaminopimelate from (S)-tetrahydrodipicolinate (succinylase route): step 3/3. Functionally, catalyzes the hydrolysis of N-succinyl-L,L-diaminopimelic acid (SDAP), forming succinate and LL-2,6-diaminopimelate (DAP), an intermediate involved in the bacterial biosynthesis of lysine and meso-diaminopimelic acid, an essential component of bacterial cell walls. The polypeptide is Succinyl-diaminopimelate desuccinylase (Burkholderia pseudomallei (strain 1106a)).